Here is a 243-residue protein sequence, read N- to C-terminus: Adenosylcobinamide-GDP ribazoletransferase (243 aa).

The next 5 membrane-spanning stretches (helical) occupy residues 31 to 51, 57 to 77, 109 to 129, 135 to 155, and 188 to 208; these read LLFY…LNIA, LLLH…ALHL, IAVV…LALI, MALI…FLTT, and LVIA…VFIW.

The protein belongs to the CobS family. Mg(2+) serves as cofactor.

The protein resides in the cell inner membrane. The catalysed reaction is alpha-ribazole + adenosylcob(III)inamide-GDP = adenosylcob(III)alamin + GMP + H(+). It catalyses the reaction alpha-ribazole 5'-phosphate + adenosylcob(III)inamide-GDP = adenosylcob(III)alamin 5'-phosphate + GMP + H(+). Its pathway is cofactor biosynthesis; adenosylcobalamin biosynthesis; adenosylcobalamin from cob(II)yrinate a,c-diamide: step 7/7. Functionally, joins adenosylcobinamide-GDP and alpha-ribazole to generate adenosylcobalamin (Ado-cobalamin). Also synthesizes adenosylcobalamin 5'-phosphate from adenosylcobinamide-GDP and alpha-ribazole 5'-phosphate. In Pseudomonas fluorescens (strain Pf0-1), this protein is Adenosylcobinamide-GDP ribazoletransferase.